Here is a 697-residue protein sequence, read N- to C-terminus: Ribosomal RNA large subunit methyltransferase K/L (697 aa).

One can recognise a THUMP domain in the interval 43–154; that stretch reads ILYNSLMWSR…QNLVHIMLDL (112 aa).

The protein belongs to the methyltransferase superfamily. RlmKL family.

It localises to the cytoplasm. The enzyme catalyses guanosine(2445) in 23S rRNA + S-adenosyl-L-methionine = N(2)-methylguanosine(2445) in 23S rRNA + S-adenosyl-L-homocysteine + H(+). It carries out the reaction guanosine(2069) in 23S rRNA + S-adenosyl-L-methionine = N(2)-methylguanosine(2069) in 23S rRNA + S-adenosyl-L-homocysteine + H(+). In terms of biological role, specifically methylates the guanine in position 2445 (m2G2445) and the guanine in position 2069 (m7G2069) of 23S rRNA. This chain is Ribosomal RNA large subunit methyltransferase K/L, found in Buchnera aphidicola subsp. Schizaphis graminum (strain Sg).